The following is a 187-amino-acid chain: Large ribosomal subunit protein bL21 (187 aa).

The interval 157-187 (KVAKKAVKKTVKKATKTGAKKKAAKKTSKKA) is disordered.

This sequence belongs to the bacterial ribosomal protein bL21 family. Part of the 50S ribosomal subunit. Contacts protein L20.

In terms of biological role, this protein binds to 23S rRNA in the presence of protein L20. The polypeptide is Large ribosomal subunit protein bL21 (Bdellovibrio bacteriovorus (strain ATCC 15356 / DSM 50701 / NCIMB 9529 / HD100)).